The following is a 4454-amino-acid chain: E3 ubiquitin-protein ligase HUWE1 (4454 aa).

A disordered region spans residues 521–575 (RASSSNSSTSISGPGPGPGPGPGPGPGPGPGPGPGPGLGPSLGPGPGPGPRPGVQ). The span at 523–533 (SSSNSSTSISG) shows a compositional bias: low complexity. The span at 535-571 (GPGPGPGPGPGPGPGPGPGPGPGLGPSLGPGPGPGPR) shows a compositional bias: pro residues. Phosphoserine occurs at positions 724 and 725. Disordered stretches follow at residues 781 to 834 (QKAD…VVGT), 1054 to 1077 (DEKAGTTQGGKRSDGEQDGTAGSM), and 1094 to 1114 (TLAPMETDEPSSSDSKGKSKI). The span at 801–811 (ASSEDEEEEEV) shows a compositional bias: acidic residues. Polar residues predominate over residues 813 to 832 (AMQSFNSAQQNETEPNQQVV). S816 bears the Phosphoserine mark. The residue at position 1160 (S1160) is a Phosphoserine. Residues 1367–1378 (LSKEKEGSRGEE) are compositionally biased toward basic and acidic residues. Positions 1367 to 1396 (LSKEKEGSRGEEEAGQEEGGSRREPQVNQQ) are disordered. Positions 1392 to 1431 (QVNQQQLQQLMDMGFTREHAMEALLNTSTMEQATEYLLTH) constitute a UBA domain. Phosphoserine occurs at positions 1444, 1446, 1458, and 1471. In terms of domain architecture, UIM spans 1446-1465 (SEEDQMMRAIAMSLGQDIPM). The tract at residues 1472–1491 (PEEVACRKEEEERKAREKQE) is disordered. Residues 1679–1756 (RAQMTKYLQS…ETGNRRPVML (78 aa)) enclose the WWE domain. Positions 1766–1802 (KNSKSSNGQELEKTLEESKETDIKRKENKGNDIPLAL) are disordered. The segment covering 1775 to 1795 (ELEKTLEESKETDIKRKENKG) has biased composition (basic and acidic residues). Phosphoserine is present on S1983. Disordered regions lie at residues 2095–2142 (APAE…SKPL), 2339–2420 (SLFG…QEMQ), and 2433–2556 (LERD…ASPL). Low complexity predominate over residues 2097 to 2112 (AETSTTGTSQGEGAST). T2112 bears the Phosphothreonine mark. The span at 2114–2134 (EETREGKKDKEGDRTSEEGKQ) shows a compositional bias: basic and acidic residues. Positions 2339 to 2368 (SLFGSKSASSKSKSEQDAQGASQDSSSHQQ) are enriched in low complexity. S2343 is subject to Phosphoserine. Residue K2344 is modified to N6-acetyllysine. Acidic residues-rich tracts occupy residues 2372 to 2383 (EPGEAEVQEEDH) and 2391 to 2402 (ADGDIMDGEAET). S2439, S2442, and S2468 each carry phosphoserine. A compositionally biased stretch (polar residues) spans 2465 to 2475 (SNLSQASTLQA). A compositionally biased stretch (acidic residues) spans 2485-2549 (DPEDEEEHTQ…SEMELDEDYP (65 aa)). Residues S2604, S2609, and S2612 each carry the phosphoserine modification. T2631 carries the post-translational modification Phosphothreonine. Residues S2661, S2672, and S2696 each carry the phosphoserine modification. Basic and acidic residues predominate over residues 2781–2793 (IIDKGKEDKENRD). Disordered stretches follow at residues 2781 to 3047 (IIDK…GVDP) and 3113 to 3136 (QQRAEQQRRELAQNASSDTPMDPV). Positions 2794-2813 (QSAQCTVSKTNDSTEQNVSD) are enriched in polar residues. A compositionally biased stretch (low complexity) spans 2815–2849 (TPMPDSYPTTPSSTDAPTSESKETLGTLQPSQQQP). Residue T2828 is modified to Phosphothreonine. 3 stretches are compositionally biased toward polar residues: residues 2895–2912 (AETTQMELSPAPTITSLS), 2924–2941 (AVSSQLEGSPMDTSSLAS), and 2954–2967 (AGSSEQPTAGSSTP). A phosphoserine mark is found at S2903, S2910, S2912, S2938, S2964, and S2965. A Phosphothreonine modification is found at T2966. Residues 2990-3009 (PPEDSSPPASSESSSTRDSA) show a composition bias toward low complexity. S2995 bears the Phosphoserine mark. A phosphoserine mark is found at S3193, S3194, S3199, S3204, and S3212. R3226 bears the Omega-N-methylarginine mark. Disordered regions lie at residues 3320 to 3343 (PKLSTSEERGKKSSKSCASSSHEN), 3431 to 3458 (QRTKETNCESDRERGSKQACSPCSSQSS), 3482 to 3501 (GKNSVKSVPVSAGGEGETSL), 3548 to 3590 (SEVQ…TTPV), and 3615 to 3642 (TPTTATTTVSTSTTKGNKSPAKVGEGGS). Residues 3432-3446 (RTKETNCESDRERGS) are compositionally biased toward basic and acidic residues. Residues 3447 to 3458 (KQACSPCSSQSS) show a composition bias toward low complexity. Composition is skewed to low complexity over residues 3552–3579 (TNSSNSGSSTAATSNTSTTTTTTTATAP) and 3615–3628 (TPTTATTTVSTSTT). Phosphoserine is present on residues S3633, S3740, S3830, S3835, S3837, and S3838. A disordered region spans residues 3815–3836 (TRRANKKAKQTGRLGSSGLGSA). A compositionally biased stretch (low complexity) spans 3826–3836 (GRLGSSGLGSA). Disordered regions lie at residues 3859–3927 (EGQR…LPLL) and 3974–4028 (RESK…SSSL). Polar residues predominate over residues 3871–3880 (TSESSNQSET). Phosphoserine is present on residues S3887, S3895, and S3907. Positions 3894 to 3905 (PSPSAQDTQSIV) are enriched in polar residues. T3910 carries the phosphothreonine modification. Basic and acidic residues-rich tracts occupy residues 3913–3922 (GEKEKEERPP) and 3974–3995 (RESKPPVRDTRESQLAHIKDEP). Residues S3986 and S3999 each carry the phosphoserine modification. Residues 3996–4005 (PPLSPAPLTP) show a composition bias toward pro residues. T4004 and T4007 each carry phosphothreonine. Positions 4018–4028 (EPSSMHISSSL) are enriched in polar residues. In terms of domain architecture, HECT spans 4118–4454 (SPEEMKNRLY…QECSEGFGLA (337 aa)). Y4351 carries the post-translational modification Phosphotyrosine. Residue C4421 is the Glycyl thioester intermediate of the active site.

It belongs to the UPL family. TOM1/PTR1 subfamily. As to quaternary structure, interacts with isoform p14ARF of CDKN2A which strongly inhibits HUWE1 ubiquitin ligase activity. Interacts with MYCN, POLB and CDC6. Interacts with isoform 2 of PA2G4. Interacts with NR1D1. Interacts with AMBRA1. Interacts with HAPSTR1. Interacts with HAPSTR2. In hepatocytes, interacts with PAQR3; the interaction promotes PPARA poylubiquitination and STUB1-mediated degradation. Post-translationally, phosphorylated on tyrosine, phosphorylation is probably required for its ability to inhibit TP53 transactivation. In terms of tissue distribution, widely expressed.

The protein resides in the cytoplasm. It is found in the nucleus. Its subcellular location is the mitochondrion. It catalyses the reaction S-ubiquitinyl-[E2 ubiquitin-conjugating enzyme]-L-cysteine + [acceptor protein]-L-lysine = [E2 ubiquitin-conjugating enzyme]-L-cysteine + N(6)-ubiquitinyl-[acceptor protein]-L-lysine.. It functions in the pathway protein modification; protein ubiquitination. E3 ubiquitin-protein ligase which mediates ubiquitination and subsequent proteasomal degradation of target proteins. Regulates apoptosis by catalyzing the polyubiquitination and degradation of MCL1. Mediates monoubiquitination of DNA polymerase beta (POLB) at 'Lys-41', 'Lys-61' and 'Lys-81', thereby playing a role in base-excision repair. Also ubiquitinates the p53/TP53 tumor suppressor and core histones including H1, H2A, H2B, H3 and H4. Ubiquitinates MFN2 to negatively regulate mitochondrial fusion in response to decreased stearoylation of TFRC. Ubiquitination of MFN2 also takes place following induction of mitophagy; AMBRA1 acts as a cofactor for HUWE1-mediated ubiquitination. Regulates neural differentiation and proliferation by catalyzing the polyubiquitination and degradation of MYCN. May regulate abundance of CDC6 after DNA damage by polyubiquitinating and targeting CDC6 to degradation. Mediates polyubiquitination of PA2G4. Acts in concert with MYCBP2 to regulate the circadian clock gene expression by promoting the lithium-induced ubiquination and degradation of NR1D1. Binds to an upstream initiator-like sequence in the preprodynorphin gene. Mediates HAPSTR1 degradation, but is also a required cofactor in the pathway by which HAPSTR1 governs stress signaling. Acts as a regulator of the JNK and NF-kappa-B signaling pathways by mediating assembly of heterotypic 'Lys-63'-/'Lys-48'-linked branched ubiquitin chains that are then recognized by TAB2: HUWE1 mediates branching of 'Lys-48'-linked chains of substrates initially modified with 'Lys-63'-linked conjugates by TRAF6. 'Lys-63'-/'Lys-48'-linked branched ubiquitin chains protect 'Lys-63'-linkages from CYLD deubiquitination. Ubiquitinates PPARA in hepatocytes. The sequence is that of E3 ubiquitin-protein ligase HUWE1 (Huwe1) from Rattus norvegicus (Rat).